Here is a 385-residue protein sequence, read N- to C-terminus: Glucans biosynthesis protein C (385 aa).

Helical transmembrane passes span 17 to 37 (AWLM…SHTW), 60 to 80 (MQVF…RYPL), 91 to 111 (VGIP…IMLQ), 137 to 157 (ISHL…VWIF), 173 to 193 (KFSM…YAVI), 212 to 232 (FIVM…LAFI), 239 to 259 (LFTT…VAYL), 274 to 294 (TESV…FSFG), 311 to 331 (ASLF…AYIT), and 338 to 358 (WLGF…LYEI).

The protein belongs to the acyltransferase 3 family. OpgC subfamily.

The protein localises to the cell membrane. Its pathway is glycan metabolism; osmoregulated periplasmic glucan (OPG) biosynthesis. In terms of biological role, necessary for the succinyl substitution of periplasmic glucans. Could catalyze the transfer of succinyl residues from the cytoplasmic side of the membrane to the nascent glucan backbones on the periplasmic side of the membrane. The chain is Glucans biosynthesis protein C from Shigella dysenteriae serotype 1 (strain Sd197).